A 3996-amino-acid polypeptide reads, in one-letter code: MPANHLPIGSTMSTVHLSSDGTYFYWIWSPASLNEKTPKGHSVFMDIFELVVENGVFVANPLQERTILMRKEGESAKSINEMLLSRLSRYRASPSATLAALTGSTISNTLKEDQAANTSCGLPLKMLRKTPIYTCGTYLVMLVPPPGGSGSSATRSLFGGTSGLSSLKRACYDTVNNMLWTCSNDYIDQWCNPGNQAFHYVCQRLGVSHIITEPKEEAITTNEVINQLLHHVGAMCIHQLNLLATNPNLPITSVLGKQHPIEAHHLSSICDIMEKAMVNGDTCIIRCILVVFQVVFKFFFSPQTERNRDIIRRSGLLLWQLLMAPKDQICPEIQKEVCLAISSGLNILYPGETEINNLLKLVLTEGERNSGLSQLRDVILTNLAEQLQNNRFGSDEDDHYRLNDELLHYILKIVVRESCILITKCQTVSKDDFQKLLSTVPAASSCLRYLMAVQNHLLSNTILIKPDENDDSDSSLQGETLKVQELKVSILALATQILTGCDEVLEMLQQVTTALINSDIADREQRLKGLEQVTKATMLGHLLPVLLTSLMHPNLQTLIMADALMPQLVQLVLYTSQTALLLKTQCPVFAEVGCSPCGAPDQKCRLFPDERMLEEKEEPGFLTGLKIPAPWAAGKTVETVHPVRDNYKFKETVHIPGARCLYLRFDSRCSSQYDYDKLVIYAGPNTNSRKVAEYGGNTLGYGSRSVLGTGWPKDLVKCISPPSLNFKVEGDTVTFSFEMRSGREHNTPDKAMWGFACTVRAQESSEDVSGGLPFLVDLALGLSVLACSMLRILYNGPEITKEEEACQELLRSKLLQRCQWQVEANGVISPALTPSPSPLPLTIEEDREFTYPSDVLVPPVGNYFDLPRIRLPPGIMIKLREISGRARPQFRPSIKEVIQPDVMEEMVVSCVIKHLNLVDALQSLINFQYQEEHAEEYDLLCKIMGETFKKLNAMERQLQSVAELEQKWQSEVDDAMQGKLENNMPFFYDYHFNENKMKELELLCSMKEVSFDGNDLENMVLSLREKFLQEVNSLIQKPSHPLAKTKTLVKSLMNRAELLLHVTIAAQSGLTRSISGTPAETPACKSASETKVISHAVRQPVFLRSMSAPSDLEMIGNEDLEFTRANQRRRHVTSHRSSSFTLLQSLAIEDSRDKPTYSVLLGQLFAFIGTNPDQAVSSSSFLLAAQTRWRRGNTRKQALVHMRELLTAAVRVGGVTHLVGPVTMVLQGGPRIEELTCGGMVEQVQEAFGETMTSVVSLCARYPIACANSIGLLCTIPYTRSEEKCLVRSGLVQLMDRLCSLSNQTESSSSEKQTKKQKVATMAWAAFQVLANRCVEWEKEEGGSTEAVHSGLARQVSSLLTNHLARATECCGNQAAGNDALQDVLSLLNDLSRSHIGKAILSQPACVSKLLSLLLDQRPSPKLVLIILQLCRAALPLMSVEDCGNVELPPWSYSVPSLNSEQEDPSDPASKIASLLLAKLADYVVPGCQTVLSPTASEPDTTLTKTSPKNSLKGDKDPGEESEAVDGKLSIFIHKREDQSSHEVLQPLLSSSEGRPFRLGTGANMEKVVKMDRDMTKGGCCEVITEEAAAALRKATKWAQSGLIVSIGPPVESINPETVSGLSTGDKKKTAQTSICRERNSELARTDPVRPFISGHVANSMAAEVIALLHSLLMAPESNAAQIWTTTAEKVLSRALMYIPQLGKYAESILENGSSSGRKLAKLQRIARQAVAALCALGGFKETIKIGSEVQVLGRGISGSIGVVASINEQEGIATVRFPPIDCRKTSQASDTLTIPLSRLCVPRSEALPLHKLSITEKVVQAVQSMLLPQEGSLSIHTSLPATGDGSAPVMAVVRLLAEIRTRACLVMAQLLEDSLFCEEFIQQCPAAVEVLNLVAQECSAGERLAVVEVQCERLRMLYRDCARPPPPPLQADRRQPKEITWSPSRVFPPVRACMFSSHLTSVTFLADPSAGGGLPRGTFIYATSPLPVQAPSFYWEIEIVSYGDTDDDTGPIVSFGFTTEAEKRDGAWTNPVGTCLFHNNGRAVHYNGSSLLQWKSVRLDVTLSPGDVAGIGWERTEGTPPPPGQPAKGRVYFTYCGQRLSPYLEDVSGGMWPVVHIQKKNTKTRANFGSRPFAYAEGQAHRNAADLCTDLAEEISANFEALPFAMASDSDNDAGTSIASDPGTHGPPCRIAAVATAQQQYDSDTSCHYKVELSYENFITSGPDPHPPPIADDESDDDDDDDIPQEDHYALLVKAWETKVFPTIRRRFRNEAERKSGLDQIKGALQLGMVDIARQTVEFLYEENGGIPRDLYLPTIEDIKDEANKFTIDKVRKGLTVVTRSPDSNNVASSAVGTALPKFAIRGMLKTFGLHGVVLDVDSVNELVQVETYLRSEGVLVRYWYPIDMLERPPAGYRRTATNGLVTLDNTNLQIHRELLRCEAALARLYCRMALLNIFAPKLPHLFTRLFHIPAIRDITLEHLQLLSNQLLAPPLPDGTISSSSILLAQSLQHCIHSQNCSATDLFYQGNSQTVREWLNVAITRTLHQGEESLLELTKQICSFLQTAPEQFPSEEFPISESKVNMDVNFPGAAFVVVSCKESQSGFRKDSSLYKAPWARVLVYGLGHKVKRNGQLNLIEAACYPRDASPANTGLAPPPTADQYPSVVLSTDRVHIKLGVSPPPGAVLVLHSLPLEFPLAMAFAEQLLSWKSEDSEGKSEDEPDTIPTSVLLQVVELLGNFLWTTDMAACVKELVFHLLAELLRTVHTLEQRRHPAGLSSSIALQLNPCLAMLMALQSELHKLYDEETQNWVSGGACGGSGGAAAGDQGRFSTYFHALMEGCLAVAEVTLPTNMSVTASGVTSATAPNLSDSSSSSSSSPGQTPQSPSLLSKRKKVKMKREKASSSGKRQSSRTVDSDPTVLSIGGSKPEDMLWFHRALTLLIILRHLTRKDPQGLGVTSDAIADACQALVGPTAHSRLLVISGIPTHLDEGVVRGAIRKACNAHGGVFKDEIYIPLQEEDTKKPKDKAEGGDGKVEPEKTLAFPGTDSMEVSTSSSLTPAMSISASASTSQASICSSQGISQTVSDLSVDPLPAGLELPIPPGLLEPHAVSSQESLDISLCSTGSLGSLGSLGEPLDNAETASVSDMGSMYTVTSLDNQPLAARPIKGFAVVEIRSRAKIEKIRASLFNNNDLIGLSSLDGEDELMEMSTEEILTVSVVNQSLFDTQGSPGLEDYFNDKSIKGEKLVPGAREVLTEIFKSCAHSEQTLSLTPAKPIRVSDIYLSKEQINSQTPGNLLHLFFTNVRPPKKVLEDQLTQILRKYGVPKPKFDKSKYSKAGKEQHPVKVVSTKRPITKPPAKDKAVLNSVSRTALSEKKPTVKPKSPEKSKPDEKDPEKSPTKKQEVPEEKYLTLEGFHKFVIDRARQDIRSVWRAILSCGYDLHFERCACIDVRHAQKASRKWTLEMDVALVQYINQLCRHLAITPARLHPHEVYLDPADAADPRVACLLNVPIESLRLRFALLQSLNTTLETFFLPLVELRQTPMYTHSIAALLKEAKGLIFYDTKVTVMNRVLNATVQRTADHAAPEITLDPLEIVGGEIRASENSYFCQAARQLASVPSSQLCVKLASGGDPTYAFNIRFTGEEVHGTSGSFRHFLWQVCKELQSSSLSLLLLCPSSAVNKNKGKYILTPSPITYGEEQLLHFLGQLLGIAIRADVPLPLDLLPSFWKTLVGEPLDPEQDLQEADILTYNYVKKFESINDETELEALCAEIASQHLATESPDSPNKPCCRFTYLTMTGEEVELCSRGRHILVAWENKDIYAAAIRSLRLRELQNVECVTAVRAGLGSIIPLQLLTMLSPLEMELRTCGLPYINLEFLKAHTMYQVGLMETDQHIEFFWGALEMFTQEELCKFIKFACNQERIPFTCPCKDGGPDTAHVPPYPMKIAPPDGTAGSPDSRYIRVETCMFMIKLPQYSSLEIMLEKLRCAIHYREDPLSG.

Residues threonine 282–proline 302 traverse the membrane as a helical segment. Positions proline 1494–asparagine 1510 are enriched in polar residues. Disordered regions lie at residues proline 1494–alanine 1524 and proline 1616–arginine 1637. At threonine 2080 the chain carries Phosphothreonine. 4 disordered regions span residues phenylalanine 2219–proline 2245, threonine 2859–leucine 2919, glutamate 3017–serine 3053, and phenylalanine 3327–proline 3403. Positions alanine 2232 to proline 2245 are enriched in acidic residues. A compositionally biased stretch (low complexity) spans leucine 2866–leucine 2887. Residues serine 2888–arginine 2897 are compositionally biased toward basic residues. Basic and acidic residues-rich tracts occupy residues glutamate 3017–lysine 3037, phenylalanine 3327–proline 3341, and leucine 3370–proline 3403. An HECT domain is found at serine 3627–glycine 3996. Cysteine 3964 functions as the Glycyl thioester intermediate in the catalytic mechanism.

It is found in the membrane. The catalysed reaction is S-ubiquitinyl-[E2 ubiquitin-conjugating enzyme]-L-cysteine + [acceptor protein]-L-lysine = [E2 ubiquitin-conjugating enzyme]-L-cysteine + N(6)-ubiquitinyl-[acceptor protein]-L-lysine.. Its pathway is protein modification; protein ubiquitination. Functionally, E3 ubiquitin-protein ligase which accepts ubiquitin from an E2 ubiquitin-conjugating enzyme in the form of a thioester and then directly transfers the ubiquitin to targeted substrates. The protein is Probable E3 ubiquitin-protein ligase HECTD4 (HECTD4) of Homo sapiens (Human).